The primary structure comprises 258 residues: uncharacterized protein (258 aa).

Transmembrane regions (helical) follow at residues 38–58, 72–92, and 111–131; these read VFGL…LFIA, ALIF…IIFI, and FLVI…MLWW.

Its subcellular location is the cell membrane. This is an uncharacterized protein from Mycoplasma pneumoniae (strain ATCC 29342 / M129 / Subtype 1) (Mycoplasmoides pneumoniae).